The primary structure comprises 341 residues: Phenylalanine--tRNA ligase alpha subunit (341 aa).

Glutamate 256 is a Mg(2+) binding site.

This sequence belongs to the class-II aminoacyl-tRNA synthetase family. Phe-tRNA synthetase alpha subunit type 1 subfamily. As to quaternary structure, tetramer of two alpha and two beta subunits. Requires Mg(2+) as cofactor.

It is found in the cytoplasm. It catalyses the reaction tRNA(Phe) + L-phenylalanine + ATP = L-phenylalanyl-tRNA(Phe) + AMP + diphosphate + H(+). The chain is Phenylalanine--tRNA ligase alpha subunit from Leptospira biflexa serovar Patoc (strain Patoc 1 / Ames).